We begin with the raw amino-acid sequence, 559 residues long: Nicotinate phosphoribosyltransferase 1 (559 aa).

2 residues coordinate nicotinate: Tyr-33 and Thr-221. His-224 is modified (phosphohistidine). Position 331 (Arg-331) interacts with nicotinate. Thr-393 is a 5-phospho-alpha-D-ribose 1-diphosphate binding site.

It belongs to the NAPRTase family. Requires Mg(2+) as cofactor. The cofactor is Mn(2+). Transiently phosphorylated on a His residue during the reaction cycle. Phosphorylation strongly increases the affinity for substrates and increases the rate of nicotinate D-ribonucleotide production. Dephosphorylation regenerates the low-affinity form of the enzyme, leading to product release.

It catalyses the reaction nicotinate + 5-phospho-alpha-D-ribose 1-diphosphate + ATP + H2O = nicotinate beta-D-ribonucleotide + ADP + phosphate + diphosphate. The protein operates within cofactor biosynthesis; NAD(+) biosynthesis; nicotinate D-ribonucleotide from nicotinate: step 1/1. Catalyzes the first step in the biosynthesis of NAD from nicotinic acid, the ATP-dependent synthesis of beta-nicotinate D-ribonucleotide from nicotinate and 5-phospho-D-ribose 1-phosphate. Helps prevent cellular oxidative stress via its role in NAD biosynthesis. The protein is Nicotinate phosphoribosyltransferase 1 of Arabidopsis thaliana (Mouse-ear cress).